Consider the following 122-residue polypeptide: Large ribosomal subunit protein uL18 (122 aa).

Residues 1–24 (MLKKADKNANRLQRHKRVRRKISG) form a disordered region. Residues 12 to 22 (LQRHKRVRRKI) are compositionally biased toward basic residues.

Belongs to the universal ribosomal protein uL18 family. Part of the 50S ribosomal subunit; part of the 5S rRNA/L5/L18/L25 subcomplex. Contacts the 5S and 23S rRNAs.

Its function is as follows. This is one of the proteins that bind and probably mediate the attachment of the 5S RNA into the large ribosomal subunit, where it forms part of the central protuberance. The polypeptide is Large ribosomal subunit protein uL18 (Clostridioides difficile (strain 630) (Peptoclostridium difficile)).